A 415-amino-acid polypeptide reads, in one-letter code: UDP-galactose transporter homolog 1 (415 aa).

Positions 1-39 (MHLVPEGSESMSTQQNGSAQKPVTLNGSASTKGQAPEAP) are disordered. Residues 9–33 (ESMSTQQNGSAQKPVTLNGSASTKG) show a composition bias toward polar residues. N-linked (GlcNAc...) asparagine glycans are attached at residues N16 and N26. Transmembrane regions (helical) follow at residues 45–65 (LIQL…WGVL), 95–115 (IVLN…YLYF), 132–152 (ILFP…FGYA), 161–181 (TFIL…LTIF), and 185–205 (YPLY…TFTL). N221 carries N-linked (GlcNAc...) asparagine glycosylation. A helical membrane pass occupies residues 223–243 (SGSSLYGIFLLSINLLLDGLT). N-linked (GlcNAc...) asparagine glycosylation is present at N244. Transmembrane regions (helical) follow at residues 281-301 (LLVM…PIPI), 325-345 (NVLG…YTLS), and 368-388 (VFWF…LVFG).

The protein belongs to the nucleotide-sugar transporter family. SLC35B subfamily.

It localises to the endoplasmic reticulum membrane. Its function is as follows. May be involved in specific transport of UDP-Gal from the cytosol to the Golgi lumen. Involved in the maintenance of optimal conditions for the folding of secretory pathway proteins in the endoplasmic reticulum. This is UDP-galactose transporter homolog 1 (hut1) from Aspergillus fumigatus (strain ATCC MYA-4609 / CBS 101355 / FGSC A1100 / Af293) (Neosartorya fumigata).